Reading from the N-terminus, the 477-residue chain is Stromelysin-1 (477 aa).

Residues 1 to 17 (MKNLPILLLLCVAACSA) form the signal peptide. Positions 18 to 99 (YPLDRSARDE…SRCGVPDVGH (82 aa)) are cleaved as a propeptide — activation peptide. The Cysteine switch signature appears at 90–97 (SRCGVPDV). Cysteine 92 serves as a coordination point for Zn(2+). A glycan (N-linked (GlcNAc...) asparagine) is linked at asparagine 120. Ca(2+) contacts are provided by aspartate 124 and aspartate 158. 2 residues coordinate Zn(2+): histidine 168 and aspartate 170. Positions 175, 176, 178, and 180 each coordinate Ca(2+). Histidine 183 contributes to the Zn(2+) binding site. 3 residues coordinate Ca(2+): glycine 190, asparagine 192, and aspartate 194. Histidine 196 contributes to the Zn(2+) binding site. Ca(2+) contacts are provided by aspartate 198, aspartate 199, and glutamate 201. Histidine 218 provides a ligand contact to Zn(2+). Glutamate 219 is an active-site residue. Zn(2+)-binding residues include histidine 222 and histidine 228. The interval 260–285 (QSLYGPPPASPDSPVEPSEPEPPAPG) is disordered. 4 Hemopexin repeats span residues 287-336 (LAMC…WPSL), 337-383 (PSGI…GFPP), 385-433 (VRKI…FPGI), and 434-477 (DSKL…WFNC). Cysteines 290 and 477 form a disulfide. Aspartate 297 serves as a coordination point for Ca(2+). Positions 389 and 438 each coordinate Ca(2+).

Belongs to the peptidase M10A family. The cofactor is Ca(2+). Zn(2+) serves as cofactor.

It localises to the secreted. Its subcellular location is the extracellular space. The protein resides in the extracellular matrix. It carries out the reaction Preferential cleavage where P1', P2' and P3' are hydrophobic residues.. Metalloproteinase with a rather broad substrate specificity that can degrade fibronectin, laminin, gelatins of type I, III, IV, and V; collagens III, IV, X, and IX, and cartilage proteoglycans. Activates different molecules including growth factors, plasminogen or other matrix metalloproteinases such as MMP9. Once released into the extracellular matrix (ECM), the inactive pro-enzyme is activated by the plasmin cascade signaling pathway. Also acts intracellularly. For example, in dopaminergic neurons, gets activated by the serine protease HTRA2 upon stress and plays a pivotal role in DA neuronal degeneration by mediating microglial activation and alpha-synuclein/SNCA cleavage. In addition, plays a role in immune response and possesses antiviral activity against various viruses. Mechanistically, translocates from the cytoplasm into the cell nucleus upon virus infection to influence NF-kappa-B activities. The protein is Stromelysin-1 (MMP3) of Equus caballus (Horse).